The chain runs to 729 residues: Fatty acid oxidation complex subunit alpha (729 aa).

Positions 1–189 are enoyl-CoA hydratase/isomerase; it reads MLYKGDTLYL…KIGLVDGVVK (189 aa). Aspartate 296 contacts substrate. The interval 311 to 729 is 3-hydroxyacyl-CoA dehydrogenase; that stretch reads ETPKQAAVLG…ARPVGDLKTA (419 aa). Residues methionine 324, aspartate 343, 400-402, lysine 407, and serine 429 each bind NAD(+); that span reads VVE. Catalysis depends on histidine 450, which acts as the For 3-hydroxyacyl-CoA dehydrogenase activity. Asparagine 453 lines the NAD(+) pocket. 2 residues coordinate substrate: asparagine 500 and tyrosine 660. The segment at 708-729 is disordered; it reads RHNEPYYPPVEPARPVGDLKTA.

In the N-terminal section; belongs to the enoyl-CoA hydratase/isomerase family. It in the C-terminal section; belongs to the 3-hydroxyacyl-CoA dehydrogenase family. Heterotetramer of two alpha chains (FadB) and two beta chains (FadA).

The catalysed reaction is a (3S)-3-hydroxyacyl-CoA + NAD(+) = a 3-oxoacyl-CoA + NADH + H(+). It catalyses the reaction a (3S)-3-hydroxyacyl-CoA = a (2E)-enoyl-CoA + H2O. The enzyme catalyses a 4-saturated-(3S)-3-hydroxyacyl-CoA = a (3E)-enoyl-CoA + H2O. It carries out the reaction (3S)-3-hydroxybutanoyl-CoA = (3R)-3-hydroxybutanoyl-CoA. The catalysed reaction is a (3Z)-enoyl-CoA = a 4-saturated (2E)-enoyl-CoA. It catalyses the reaction a (3E)-enoyl-CoA = a 4-saturated (2E)-enoyl-CoA. It functions in the pathway lipid metabolism; fatty acid beta-oxidation. Its function is as follows. Involved in the aerobic and anaerobic degradation of long-chain fatty acids via beta-oxidation cycle. Catalyzes the formation of 3-oxoacyl-CoA from enoyl-CoA via L-3-hydroxyacyl-CoA. It can also use D-3-hydroxyacyl-CoA and cis-3-enoyl-CoA as substrate. This chain is Fatty acid oxidation complex subunit alpha, found in Escherichia coli (strain SMS-3-5 / SECEC).